The following is a 207-amino-acid chain: LexA repressor (207 aa).

Residues arginine 28–lysine 48 constitute a DNA-binding region (H-T-H motif). Residues serine 124 and lysine 161 each act as for autocatalytic cleavage activity in the active site.

It belongs to the peptidase S24 family. Homodimer.

It catalyses the reaction Hydrolysis of Ala-|-Gly bond in repressor LexA.. Its function is as follows. Represses a number of genes involved in the response to DNA damage (SOS response), including recA and lexA. In the presence of single-stranded DNA, RecA interacts with LexA causing an autocatalytic cleavage which disrupts the DNA-binding part of LexA, leading to derepression of the SOS regulon and eventually DNA repair. This Vibrio vulnificus (strain CMCP6) protein is LexA repressor.